A 187-amino-acid polypeptide reads, in one-letter code: Tetraheme c-type cytochrome CymA (187 aa).

Topologically, residues 1–12 are cytoplasmic; the sequence is MNWRALFKPSAK. The chain crosses the membrane as a helical span at residues 13–33; it reads YSILALLVVGIVIGVVGYFAT. The Periplasmic segment spans residues 34–187; sequence QQTLHATSTD…KGVAHPYPKG (154 aa). Heme c-binding residues include C46, C49, H64, C75, C78, H79, D97, C136, C139, H140, C173, C176, H177, and H182.

Belongs to the NapC/NirT/NrfH family. In terms of assembly, homodimer. Heme c is required as a cofactor.

It localises to the cell inner membrane. The enzyme catalyses a quinol + 2 Fe(III)-[cytochrome c](out) = a quinone + 2 Fe(II)-[cytochrome c](out) + 2 H(+)(out). Its activity is regulated as follows. Spectroscopic studies suggest that CymA requires a non-heme cofactor for quinol oxidation. Quinol dehydrogenase involved in several anaerobic electron transfer pathways. Acquires electrons from the membrane quinone pool and mediates their transfer to several periplasmic terminal reductases and redox shuttles, including the fumarate reductase FccA, the small tetraheme cytochrome (STC), the c-type cytochrome MtrA, the nitrate reductase NapA (either through NapB or directly), the nitrite reductase NrfA and probably also the DmsE subunit of dimethyl sulfoxide (DMSO) reductase. Required for growth on fumarate and on DMSO, and for the reduction of iron(III), manganese(IV), nitrite and nitrate. Not essential for growth on trimethylamine-N-oxide (TMAO). This chain is Tetraheme c-type cytochrome CymA, found in Shewanella oneidensis (strain ATCC 700550 / JCM 31522 / CIP 106686 / LMG 19005 / NCIMB 14063 / MR-1).